A 60-amino-acid polypeptide reads, in one-letter code: UPF0434 protein Mfla_2088 (60 aa).

The protein belongs to the UPF0434 family.

This is UPF0434 protein Mfla_2088 from Methylobacillus flagellatus (strain ATCC 51484 / DSM 6875 / VKM B-1610 / KT).